Reading from the N-terminus, the 120-residue chain is uncharacterized protein (120 aa).

Positions 29–120 (QRQAAVLVPI…QVTPVVGIIP (92 aa)) constitute a Nudix hydrolase domain. A Nudix box motif is present at residues 67–89 (GAVDNSDATLIAAALREAQEEVA). Residues Glu83 and Glu87 each contribute to the Mg(2+) site.

This sequence belongs to the Nudix hydrolase family. PCD1 subfamily. The cofactor is Mn(2+). Mg(2+) serves as cofactor.

Functionally, probably mediates the hydrolysis of some nucleoside diphosphate derivatives. This is an uncharacterized protein from Klebsiella aerogenes (Enterobacter aerogenes).